The following is a 363-amino-acid chain: Protein U2 (363 aa).

The signal sequence occupies residues 1 to 18 (MFCRSPFLGISSWSLASA).

The protein is Protein U2 (U2) of Homo sapiens (Human).